Here is a 451-residue protein sequence, read N- to C-terminus: Phosphoglucosamine mutase (451 aa).

Ser107 acts as the Phosphoserine intermediate in catalysis. Residues Ser107, Asp246, Asp248, and Asp250 each contribute to the Mg(2+) site. Ser107 carries the phosphoserine modification.

The protein belongs to the phosphohexose mutase family. It depends on Mg(2+) as a cofactor. Activated by phosphorylation.

The catalysed reaction is alpha-D-glucosamine 1-phosphate = D-glucosamine 6-phosphate. Its function is as follows. Catalyzes the conversion of glucosamine-6-phosphate to glucosamine-1-phosphate. The sequence is that of Phosphoglucosamine mutase from Burkholderia ambifaria (strain ATCC BAA-244 / DSM 16087 / CCUG 44356 / LMG 19182 / AMMD) (Burkholderia cepacia (strain AMMD)).